We begin with the raw amino-acid sequence, 210 residues long: Ribosomal RNA small subunit methyltransferase G (210 aa).

S-adenosyl-L-methionine contacts are provided by residues G76, M81, 127 to 128, and R145; that span reads VE.

Belongs to the methyltransferase superfamily. RNA methyltransferase RsmG family.

The protein resides in the cytoplasm. The catalysed reaction is guanosine(527) in 16S rRNA + S-adenosyl-L-methionine = N(7)-methylguanosine(527) in 16S rRNA + S-adenosyl-L-homocysteine. In terms of biological role, specifically methylates the N7 position of guanine in position 527 of 16S rRNA. The chain is Ribosomal RNA small subunit methyltransferase G from Acinetobacter baumannii (strain AB307-0294).